The primary structure comprises 353 residues: Photosystem II D2 protein (353 aa).

N-acetylthreonine is present on threonine 2. Threonine 2 is modified (phosphothreonine). Residues 41 to 61 traverse the membrane as a helical segment; sequence CAYFAVGGWFTGTTFVTSWYT. Position 118 (histidine 118) interacts with chlorophyll a. Residues 125–141 form a helical membrane-spanning segment; it reads GFMLRQFELARSVQLRP. Glutamine 130 and asparagine 143 together coordinate pheophytin a. Residues 153–166 form a helical membrane-spanning segment; that stretch reads VFVSVFLIYPLGQS. Histidine 198 serves as a coordination point for chlorophyll a. The chain crosses the membrane as a helical span at residues 208-228; it reads AALLCAIHGATVENTLFEDGD. The a plastoquinone site is built by histidine 215 and phenylalanine 262. Histidine 215 provides a ligand contact to Fe cation. Histidine 269 serves as a coordination point for Fe cation. A helical membrane pass occupies residues 279–295; that stretch reads GLWMSALGVVGLALNLR.

It belongs to the reaction center PufL/M/PsbA/D family. PSII is composed of 1 copy each of membrane proteins PsbA, PsbB, PsbC, PsbD, PsbE, PsbF, PsbH, PsbI, PsbJ, PsbK, PsbL, PsbM, PsbT, PsbX, PsbY, PsbZ, Psb30/Ycf12, at least 3 peripheral proteins of the oxygen-evolving complex and a large number of cofactors. It forms dimeric complexes. The D1/D2 heterodimer binds P680, chlorophylls that are the primary electron donor of PSII, and subsequent electron acceptors. It shares a non-heme iron and each subunit binds pheophytin, quinone, additional chlorophylls, carotenoids and lipids. There is also a Cl(-1) ion associated with D1 and D2, which is required for oxygen evolution. The PSII complex binds additional chlorophylls, carotenoids and specific lipids. serves as cofactor.

The protein resides in the plastid. Its subcellular location is the chloroplast thylakoid membrane. The catalysed reaction is 2 a plastoquinone + 4 hnu + 2 H2O = 2 a plastoquinol + O2. In terms of biological role, photosystem II (PSII) is a light-driven water:plastoquinone oxidoreductase that uses light energy to abstract electrons from H(2)O, generating O(2) and a proton gradient subsequently used for ATP formation. It consists of a core antenna complex that captures photons, and an electron transfer chain that converts photonic excitation into a charge separation. The D1/D2 (PsbA/PsbD) reaction center heterodimer binds P680, the primary electron donor of PSII as well as several subsequent electron acceptors. D2 is needed for assembly of a stable PSII complex. The chain is Photosystem II D2 protein from Ipomoea purpurea (Common morning glory).